The primary structure comprises 352 residues: 4-hydroxy-2-oxovalerate aldolase 5 (352 aa).

The Pyruvate carboxyltransferase domain occupies 9–261 (IRVTDSSLRD…RTGIDTLKII (253 aa)). Position 17–18 (17–18 (RD)) interacts with substrate. Aspartate 18 lines the Mn(2+) pocket. The active-site Proton acceptor is the histidine 21. Substrate-binding residues include serine 171 and histidine 200. Histidine 200 and histidine 202 together coordinate Mn(2+). Tyrosine 291 contacts substrate.

This sequence belongs to the 4-hydroxy-2-oxovalerate aldolase family.

The enzyme catalyses (S)-4-hydroxy-2-oxopentanoate = acetaldehyde + pyruvate. In Rhodococcus opacus (strain B4), this protein is 4-hydroxy-2-oxovalerate aldolase 5.